A 406-amino-acid polypeptide reads, in one-letter code: LIM/homeobox protein Lhx1 (406 aa).

LIM zinc-binding domains are found at residues 4-54 (CAGC…CKND) and 63-117 (CAGC…CKED). 2 disordered regions span residues 128-187 (NSLH…RTTI) and 293-374 (YDFF…EVFG). Low complexity predominate over residues 137 to 148 (SDPSLSPDSQDP). A compositionally biased stretch (basic and acidic residues) spans 151 to 167 (DDAKDSESANVSDKEAG). A Phosphoserine modification is found at Ser-162. Residues 180 to 239 (RRGPRTTIKAKQLETLKAAFAATPKPTRHIREQLAQETGLNMRVIQVWFQNRRSKERRMK) constitute a DNA-binding region (homeobox). Low complexity predominate over residues 315–327 (PSSGPSGTPLGGL). A compositionally biased stretch (pro residues) spans 352-362 (GDSPSPEPSLP).

As to quaternary structure, interacts with LDB1 via the tandem LIM domains. In terms of tissue distribution, expressed in the brain, thymus, and tonsils. Expressed in samples from patients with chronic myeloid leukemia (CML) and in 58% of acute myeloid leukemia (AML) cell lines.

Its subcellular location is the nucleus. Its function is as follows. Potential transcription factor. May play a role in early mesoderm formation and later in lateral mesoderm differentiation and neurogenesis. The chain is LIM/homeobox protein Lhx1 (LHX1) from Homo sapiens (Human).